The following is a 138-amino-acid chain: Acidic phospholipase A2 1 (138 aa).

Positions 1-16 (MRTLWIMAVLLVGVDG) are cleaved as a signal peptide. Disulfide bonds link Cys42–Cys131, Cys44–Cys60, Cys59–Cys110, Cys65–Cys138, Cys66–Cys103, Cys73–Cys97, and Cys91–Cys101. The Ca(2+) site is built by Tyr43, Gly45, and Gly47. Residue His63 is part of the active site. Asp64 contributes to the Ca(2+) binding site. Asp104 is an active-site residue.

It belongs to the phospholipase A2 family. Group II subfamily. D49 sub-subfamily. Homodimer. Requires Ca(2+) as cofactor. Expressed by the venom gland.

It is found in the secreted. The enzyme catalyses a 1,2-diacyl-sn-glycero-3-phosphocholine + H2O = a 1-acyl-sn-glycero-3-phosphocholine + a fatty acid + H(+). In terms of biological role, snake venom phospholipase A2 (PLA2) that is highly lipolytic and myolytic. PLA2 catalyzes the calcium-dependent hydrolysis of the 2-acyl groups in 3-sn-phosphoglycerides. The chain is Acidic phospholipase A2 1 from Protobothrops flavoviridis (Habu).